Consider the following 181-residue polypeptide: MASSVISSAAVATRTNVTQAGSMIAPFTGLKSAATFPVSRKQNLDITSIASNGGRVRCMQVWPPINMKKYETLSYLPDLTDEQLLKEVEYLLKNGWVPCLEFETEHGFVYRENHKSPGYYDGRYWTMWKLPMFGCTDATQVLAEVQECKKSYPQAWIRIIGFDNVRQVQCISFIAYKPEGY.

Residues Met-1–Arg-57 constitute a chloroplast transit peptide.

Belongs to the RuBisCO small chain family. Heterohexadecamer of 8 large and 8 small subunits.

Its subcellular location is the plastid. It is found in the chloroplast. In terms of biological role, ruBisCO catalyzes two reactions: the carboxylation of D-ribulose 1,5-bisphosphate, the primary event in carbon dioxide fixation, as well as the oxidative fragmentation of the pentose substrate. Both reactions occur simultaneously and in competition at the same active site. Although the small subunit is not catalytic it is essential for maximal activity. This is Ribulose bisphosphate carboxylase small subunit, chloroplastic 2 from Solanum tuberosum (Potato).